The sequence spans 255 residues: Pre-miRNA 5'-monophosphate methyltransferase (255 aa).

S-adenosyl-L-methionine contacts are provided by residues Arg32, Asn66, Asp96, 121–122 (DI), and Met150. Residues 41–253 (LHKLFRKPAE…SLLLFKIQRH (213 aa)) form the Bin3-type SAM domain.

The protein belongs to the methyltransferase superfamily.

It localises to the cytoplasm. The catalysed reaction is a 5'-end 5'-phospho-ribonucleoside-RNA + S-adenosyl-L-methionine = a 5'-end (5'-methylphospho)-ribonucleoside-RNA + S-adenosyl-L-homocysteine. It catalyses the reaction a 5'-end 5'-phospho-ribonucleoside-RNA + 2 S-adenosyl-L-methionine = a 5'-end (5'-bismethylphospho)-ribonucleoside-RNA + 2 S-adenosyl-L-homocysteine. O-methyltransferase that specifically monomethylates 5'-monophosphate of cytoplasmic histidyl tRNA (tRNA(His)), acting as a capping enzyme by protecting tRNA(His) from cleavage by DICER1. Also able, with less efficiently, to methylate the 5' monophosphate of a subset of pre-miRNAs, acting as a negative regulator of miRNA processing. The 5' monophosphate of pre-miRNAs is recognized by DICER1 and is required for pre-miRNAs processing: methylation at this position reduces the processing of pre-miRNAs by DICER1. Was also reported to mediate dimethylation of pre-miR-145; however dimethylation cannot be reproduced by another group which observes a monomethylation of pre-miR-145. The protein is Pre-miRNA 5'-monophosphate methyltransferase (bcdin3d) of Xenopus laevis (African clawed frog).